We begin with the raw amino-acid sequence, 33 residues long: MIDYVGLFIGAYIMGFALFYGIGFFKSIAERIV.

Residues 5-25 form a helical membrane-spanning segment; it reads VGLFIGAYIMGFALFYGIGFF.

The protein belongs to the inovirus G9P protein family.

Its subcellular location is the virion. It localises to the host membrane. In terms of biological role, may initiate with G7P the virion concomitant assembly-budding process, by interacting with the packaging signal of the viral genome. The assembly-budding takes place at the host inner membrane. In turn, G7P and G9P are present at the end of the filamentous virion that emerges first from the bacterial host. The chain is Tail virion protein G9P (IX) from Escherichia coli (Bacteriophage I2-2).